The sequence spans 289 residues: ATP synthase gamma chain (289 aa).

This sequence belongs to the ATPase gamma chain family. F-type ATPases have 2 components, CF(1) - the catalytic core - and CF(0) - the membrane proton channel. CF(1) has five subunits: alpha(3), beta(3), gamma(1), delta(1), epsilon(1). CF(0) has three main subunits: a, b and c.

The protein resides in the cell inner membrane. Produces ATP from ADP in the presence of a proton gradient across the membrane. The gamma chain is believed to be important in regulating ATPase activity and the flow of protons through the CF(0) complex. The chain is ATP synthase gamma chain from Histophilus somni (strain 129Pt) (Haemophilus somnus).